A 441-amino-acid chain; its full sequence is Xylose isomerase 1 (441 aa).

Residues H105 and D108 contribute to the active site. Residues E236, E272, H275, D300, D311, D313, and D343 each coordinate Mg(2+).

It belongs to the xylose isomerase family. Homotetramer. The cofactor is Mg(2+).

The protein localises to the cytoplasm. It catalyses the reaction alpha-D-xylose = alpha-D-xylulofuranose. The sequence is that of Xylose isomerase 1 (xylA1) from Xanthomonas axonopodis pv. citri (strain 306).